The chain runs to 34 residues: Papillosin (34 aa).

Its function is as follows. Has strong antibacterial activity against the Gram-positive bacteria M.luteus, S.aureus, B.megaterium, A.viridans and E.faecalis, and against the Gram-negative bacteria K.pneumoniae, E.coli DH5alpha, S.typhimurium, P.aeruginosa and E.aerogenes. Lacks hemolytic activity against sheep erythrocytes. In Halocynthia papillosa (Red sea-squirt), this protein is Papillosin.